The chain runs to 772 residues: Protein transport protein SEC23 F (772 aa).

Zn(2+)-binding residues include cysteine 65, cysteine 68, cysteine 87, and cysteine 90. Positions 65–90 are zinc finger-like; that stretch reads CKTCKALLNAFARVDFAAMNWVCPFC.

The protein belongs to the SEC23/SEC24 family. SEC23 subfamily. In terms of assembly, component of the coat protein complex II (COPII), composed of at least five proteins: the Sec23/24 complex, the Sec13/31 complex and Sar1. Interacts with SEC24A.

It localises to the cytoplasmic vesicle. The protein localises to the COPII-coated vesicle membrane. Its subcellular location is the endoplasmic reticulum membrane. The protein resides in the membrane. Functionally, component of the coat protein complex II (COPII) which promotes the formation of transport vesicles from the endoplasmic reticulum (ER). The coat has two main functions, the physical deformation of the endoplasmic reticulum membrane into vesicles and the selection of cargo molecules. This is Protein transport protein SEC23 F from Arabidopsis thaliana (Mouse-ear cress).